The sequence spans 474 residues: BPI fold-containing family B member 1 (474 aa).

The first 21 residues, M1–A21, serve as a signal peptide directing secretion. Residues N153, N160, N263, and N400 are each glycosylated (N-linked (GlcNAc...) asparagine). C157 and C200 form a disulfide bridge.

This sequence belongs to the BPI/LBP/Plunc superfamily. Plunc family. As to expression, expressed in tongue, lung, thymus, and stomach. Expressed in epithelia of palate, anterior pharynx, trachea and upper bronchi. Expressed in distal tip of papillae in the anterior third of the tongue and in serous cells of von Ebner glands in the posterior third of the tongue. Expressed in columnar epithelium of the duodenum in embryonic gut at 16.5 dpc.

It localises to the secreted. Its function is as follows. May play a role in innate immunity in mouth, nose and lungs. Binds bacterial lipopolysaccharide (LPS) and modulates the cellular responses to LPS. May be involved in formation of the left-right axis in the node of the developing embryo. The protein is BPI fold-containing family B member 1 (Bpifb1) of Mus musculus (Mouse).